We begin with the raw amino-acid sequence, 327 residues long: Phosphate acyltransferase (327 aa).

Belongs to the PlsX family. In terms of assembly, homodimer. Probably interacts with PlsY.

It localises to the cytoplasm. The enzyme catalyses a fatty acyl-[ACP] + phosphate = an acyl phosphate + holo-[ACP]. The protein operates within lipid metabolism; phospholipid metabolism. Functionally, catalyzes the reversible formation of acyl-phosphate (acyl-PO(4)) from acyl-[acyl-carrier-protein] (acyl-ACP). This enzyme utilizes acyl-ACP as fatty acyl donor, but not acyl-CoA. The chain is Phosphate acyltransferase from Thermotoga maritima (strain ATCC 43589 / DSM 3109 / JCM 10099 / NBRC 100826 / MSB8).